The following is a 148-amino-acid chain: 3-dehydroquinate dehydratase (148 aa).

Tyr-23 functions as the Proton acceptor in the catalytic mechanism. Substrate contacts are provided by Asn-75, His-81, and Asp-88. The active-site Proton donor is the His-101. Residues 102-103 and Arg-112 contribute to the substrate site; that span reads IS.

Belongs to the type-II 3-dehydroquinase family. In terms of assembly, homododecamer.

The catalysed reaction is 3-dehydroquinate = 3-dehydroshikimate + H2O. The protein operates within metabolic intermediate biosynthesis; chorismate biosynthesis; chorismate from D-erythrose 4-phosphate and phosphoenolpyruvate: step 3/7. Its function is as follows. Catalyzes a trans-dehydration via an enolate intermediate. In Methylococcus capsulatus (strain ATCC 33009 / NCIMB 11132 / Bath), this protein is 3-dehydroquinate dehydratase.